A 61-amino-acid polypeptide reads, in one-letter code: Conotoxin TeAr154 (61 aa).

A signal peptide spans 1 to 19 (MHCLPVFVILLLLTASGLS). Positions 20–47 (VDARPKTEDDVPLSSFRDNTKSTLQRLL) are excised as a propeptide. Position 57 is a 4-carboxyglutamate (Glu-57).

In terms of processing, contains 2 disulfide bonds that can be either 'C1-C3, C2-C4' or 'C1-C4, C2-C3', since these disulfide connectivities have been observed for conotoxins with cysteine framework V (for examples, see AC P0DQQ7 and AC P81755). Contains 2 disulfide bonds. Expressed by the venom duct.

The protein localises to the secreted. The chain is Conotoxin TeAr154 from Conus textile (Cloth-of-gold cone).